A 444-amino-acid chain; its full sequence is Maintenance of mitochondrial morphology protein 1 (444 aa).

The span at 1–16 (MKGVENTLSQSESVNR) shows a compositional bias: polar residues. The segment at 1 to 20 (MKGVENTLSQSESVNRGYNG) is disordered. Residues 1-107 (MKGVENTLSQ…TFSSRSFAEG (107 aa)) lie on the Lumenal side of the membrane. The helical transmembrane segment at 108–128 (LVVGQLSVIVVLIFFIKFFIF) threads the bilayer. At 129–444 (SDGPAKTGGG…QEEDPSRAPE (316 aa)) the chain is on the cytoplasmic side. A disordered region spans residues 136 to 157 (GGGGGSSAESRSSGFTGSPLTS). Positions 142–157 (SAESRSSGFTGSPLTS) are enriched in low complexity. The SMP-LTD domain occupies 204-418 (SPESLDWFNV…EPRFQFVKLP (215 aa)). Residues 425 to 444 (KNTREEKSDMQEEDPSRAPE) form a disordered region. A compositionally biased stretch (basic and acidic residues) spans 426–444 (NTREEKSDMQEEDPSRAPE).

It belongs to the MMM1 family. Homodimer. Component of the ER-mitochondria encounter structure (ERMES) or MDM complex, composed of MMM1, MDM10, MDM12 and MDM34. An MMM1 homodimer associates with one molecule of MDM12 on each side in a pairwise head-to-tail manner, and the SMP-LTD domains of MMM1 and MDM12 generate a continuous hydrophobic tunnel for phospholipid trafficking.

The protein resides in the endoplasmic reticulum membrane. Its function is as follows. Component of the ERMES/MDM complex, which serves as a molecular tether to connect the endoplasmic reticulum (ER) and mitochondria. Components of this complex are involved in the control of mitochondrial shape and protein biogenesis, and function in nonvesicular lipid trafficking between the ER and mitochondria. The MDM12-MMM1 subcomplex functions in the major beta-barrel assembly pathway that is responsible for biogenesis of all outer membrane beta-barrel proteins, and acts in a late step after the SAM complex. The MDM10-MDM12-MMM1 subcomplex further acts in the TOM40-specific pathway after the action of the MDM12-MMM1 complex. Essential for establishing and maintaining the structure of mitochondria and maintenance of mtDNA nucleoids. The protein is Maintenance of mitochondrial morphology protein 1 of Eremothecium gossypii (strain ATCC 10895 / CBS 109.51 / FGSC 9923 / NRRL Y-1056) (Yeast).